Reading from the N-terminus, the 125-residue chain is U-scoloptoxin(05)-Er1a (125 aa).

The signal sequence occupies residues 1-20 (MLSLGVSIFLLVFLIPENSG).

It belongs to the scoloptoxin-05 family. In terms of processing, contains 4 disulfide bonds. Expressed by the venom gland.

The protein resides in the secreted. This chain is U-scoloptoxin(05)-Er1a, found in Ethmostigmus rubripes (Giant centipede).